The primary structure comprises 353 residues: Photosystem II D2 protein (353 aa).

Position 2 is an N-acetylthreonine (Thr-2). Position 2 is a phosphothreonine (Thr-2). The chain crosses the membrane as a helical span at residues 41 to 61 (CAYFALGGWFTGTTFVTSWYT). His-118 is a chlorophyll a binding site. A helical transmembrane segment spans residues 125-141 (GFMLRQFELARSVQLRP). The pheophytin a site is built by Gln-130 and Asn-143. Residues 153-166 (VFVSVFLIYPLGQS) traverse the membrane as a helical segment. A chlorophyll a-binding site is contributed by His-198. The helical transmembrane segment at 208-228 (AALLCAIHGATVENTLFEDGD) threads the bilayer. A plastoquinone-binding residues include His-215 and Phe-262. Residue His-215 coordinates Fe cation. A Fe cation-binding site is contributed by His-269. The chain crosses the membrane as a helical span at residues 279–295 (GLWMSAIGVVGLALNLR).

This sequence belongs to the reaction center PufL/M/PsbA/D family. In terms of assembly, PSII is composed of 1 copy each of membrane proteins PsbA, PsbB, PsbC, PsbD, PsbE, PsbF, PsbH, PsbI, PsbJ, PsbK, PsbL, PsbM, PsbT, PsbX, PsbY, PsbZ, Psb30/Ycf12, at least 3 peripheral proteins of the oxygen-evolving complex and a large number of cofactors. It forms dimeric complexes. The cofactor is The D1/D2 heterodimer binds P680, chlorophylls that are the primary electron donor of PSII, and subsequent electron acceptors. It shares a non-heme iron and each subunit binds pheophytin, quinone, additional chlorophylls, carotenoids and lipids. There is also a Cl(-1) ion associated with D1 and D2, which is required for oxygen evolution. The PSII complex binds additional chlorophylls, carotenoids and specific lipids..

It localises to the plastid. The protein resides in the chloroplast thylakoid membrane. The catalysed reaction is 2 a plastoquinone + 4 hnu + 2 H2O = 2 a plastoquinol + O2. In terms of biological role, photosystem II (PSII) is a light-driven water:plastoquinone oxidoreductase that uses light energy to abstract electrons from H(2)O, generating O(2) and a proton gradient subsequently used for ATP formation. It consists of a core antenna complex that captures photons, and an electron transfer chain that converts photonic excitation into a charge separation. The D1/D2 (PsbA/PsbD) reaction center heterodimer binds P680, the primary electron donor of PSII as well as several subsequent electron acceptors. D2 is needed for assembly of a stable PSII complex. In Welwitschia mirabilis (Tree tumbo), this protein is Photosystem II D2 protein.